The sequence spans 316 residues: Oligopeptide transport system permease protein AppB (316 aa).

Helical transmembrane passes span 10–30 (LMSIPILLGITILSFVIMKAA), 100–120 (LLLMLVSTILALMISIPFGVL), 138–158 (FIGLAIPNFWFGLILIMVLSV), 177–197 (IFDRIHHLILPAFVLATADMA), 240–260 (LPVITIFGLMIPSFIGGSVVV), and 290–310 (VISAVLVVVGNLIADILYAIV). In terms of domain architecture, ABC transmembrane type-1 spans 96–303 (LPNTLLLMLV…VLVVVGNLIA (208 aa)).

The protein belongs to the binding-protein-dependent transport system permease family. OppBC subfamily.

Its subcellular location is the cell membrane. Its function is as follows. This protein is a component of an oligopeptide permease, a binding protein-dependent transport system. This APP system can completely substitute for the OPP system in both sporulation and genetic competence, though, unlike OPP, is incapable of transporting tripeptides. Probably responsible for the translocation of the substrate across the membrane. This is Oligopeptide transport system permease protein AppB (appB) from Bacillus subtilis (strain 168).